Here is a 458-residue protein sequence, read N- to C-terminus: UDP-N-acetylmuramate--L-alanine ligase (458 aa).

An ATP-binding site is contributed by 115–121; sequence GSHGKTT.

The protein belongs to the MurCDEF family.

The protein resides in the cytoplasm. It catalyses the reaction UDP-N-acetyl-alpha-D-muramate + L-alanine + ATP = UDP-N-acetyl-alpha-D-muramoyl-L-alanine + ADP + phosphate + H(+). It functions in the pathway cell wall biogenesis; peptidoglycan biosynthesis. Functionally, cell wall formation. This Anaeromyxobacter dehalogenans (strain 2CP-1 / ATCC BAA-258) protein is UDP-N-acetylmuramate--L-alanine ligase.